The following is a 93-amino-acid chain: U8-theraphotoxin-Hs1b (93 aa).

The signal sequence occupies residues 1–18 (MKAILLLAIFSVLTVAIC). Intrachain disulfides connect Cys-40–Cys-54, Cys-40–Cys-81, Cys-53–Cys-66, and Cys-84–Cys-91.

It belongs to the neurotoxin 27 (Jztx-72) family. ICK-72 subfamily. In terms of tissue distribution, expressed by the venom gland.

It is found in the secreted. Its function is as follows. Probable neurotoxin with ion channel impairing activity. The sequence is that of U8-theraphotoxin-Hs1b from Cyriopagopus schmidti (Chinese bird spider).